Here is a 357-residue protein sequence, read N- to C-terminus: DNA replication and repair protein RecF (357 aa).

Position 30-37 (30-37 (GANGSGKT)) interacts with ATP.

The protein belongs to the RecF family.

The protein localises to the cytoplasm. In terms of biological role, the RecF protein is involved in DNA metabolism; it is required for DNA replication and normal SOS inducibility. RecF binds preferentially to single-stranded, linear DNA. It also seems to bind ATP. The protein is DNA replication and repair protein RecF of Salmonella arizonae (strain ATCC BAA-731 / CDC346-86 / RSK2980).